The chain runs to 318 residues: Pyrimidine-specific ribonucleoside hydrolase RihA (318 aa).

The active site involves His-240.

It belongs to the IUNH family. RihA subfamily.

Functionally, hydrolyzes cytidine or uridine to ribose and cytosine or uracil, respectively. This Shewanella baltica (strain OS155 / ATCC BAA-1091) protein is Pyrimidine-specific ribonucleoside hydrolase RihA.